The sequence spans 392 residues: PFADDLAVLVEGDSRAEIEKVGKAVVKHIVERCSAIKLEVSESKTVGIFVKKPKVVGSKAVKINRKDCRKGGARNLKIELGGKSISFEQSVRYLGVHFDANLGISAHCKYLREKLVPLFSDLRKLAQCQWGLGHKALETIYKGVFVPTVCYASARWYKEGAHTDRILEDLHRQILIAITRCYRSTSYEAACVLAGTLPICIQLRVSVAKYHLRKGEDAEIGGVVIRRRPEGLKENYNRVLEVANEMWQARWEASEQGNATRELFFPDVVARVKSDWIRPDHFTSQVLTGHGYYNEKLHQLSLAKAAACICCGEPDNNLHFLLECPAFAEFRDELITPVSGGLEAPEATLMLVSSPEGFAALKEYSRVAFECKRQLENALTESDEGLSSESEE.

Positions 1–230 constitute a Reverse transcriptase domain; it reads PFADDLAVLV…GGVVIRRRPE (230 aa). The tract at residues 231–392 is nucleic acid-binding endonuclease; sequence GLKENYNRVL…DEGLSSESEE (162 aa).

The catalysed reaction is DNA(n) + a 2'-deoxyribonucleoside 5'-triphosphate = DNA(n+1) + diphosphate. This chain is Retrovirus-related Pol polyprotein from type-1 retrotransposable element R1 4, found in Nasonia vitripennis (Parasitic wasp).